A 512-amino-acid polypeptide reads, in one-letter code: MRDLTSATDSASLESDSSRNQFIINSLLPWYSCSEHEFPHRKARKRRSPKNLDWSVSVQMPLVTSKTKESEKSPKSWSAIAKKHVQGDSPVKKSHSVPVPSDRSEKKSFNSSLGELIETYSPSLDAPRPIQPRGFINTGNICFMNSILQALMYCVPFYNLLKQINRMVPYNFERTTPLIESLTMLSRDFREYSEKFDLQGDSILPEVVYSATKGNPRFEMLQTGEQEDAEEFLNLFLDELHEEFVRERRHYLLKNDERNPKSDIKISNGIKSGLDSFDDQSSVEASGWTEVGKNKKPVIARSATVERSPISQIFGGQLRSTLRVPSARDSVLLEPFQPLQLDIQAEDIHSVIDALEHMTAPEILPEWHSSKGNVTATKQMYIESLPPVLILHLKRFFYEASGGTQKNYKPIAYPARLSIPQNVFSPSVRGSIHPEYDLNAVVYHHGTSASGGHYTVDVQQLDKSGWFRIDDTHIHRVPIHDVENSELSADPSLSKLGHGDRVAYLLFYTRRS.

Residues 64–109 are disordered; sequence TSKTKESEKSPKSWSAIAKKHVQGDSPVKKSHSVPVPSDRSEKKSF. Residues 133-511 enclose the USP domain; that stretch reads RGFINTGNIC…VAYLLFYTRR (379 aa). The Nucleophile role is filled by Cys142. His453 serves as the catalytic Proton acceptor.

This sequence belongs to the peptidase C19 family.

The catalysed reaction is Thiol-dependent hydrolysis of ester, thioester, amide, peptide and isopeptide bonds formed by the C-terminal Gly of ubiquitin (a 76-residue protein attached to proteins as an intracellular targeting signal).. This Schizosaccharomyces pombe (strain 972 / ATCC 24843) (Fission yeast) protein is Probable ubiquitin carboxyl-terminal hydrolase 3 (ubp3).